Here is a 292-residue protein sequence, read N- to C-terminus: Acetyl-coenzyme A carboxylase carboxyl transferase subunit beta (292 aa).

A CoA carboxyltransferase N-terminal domain is found at 36–292 (MWSKCEKCAK…LLRMHEVDYE (257 aa)). Residues Cys-40, Cys-43, Cys-59, and Cys-62 each coordinate Zn(2+). The C4-type zinc finger occupies 40 to 62 (CEKCAKILYTEDLRENFNVCPNC).

This sequence belongs to the AccD/PCCB family. In terms of assembly, acetyl-CoA carboxylase is a heterohexamer composed of biotin carboxyl carrier protein (AccB), biotin carboxylase (AccC) and two subunits each of ACCase subunit alpha (AccA) and ACCase subunit beta (AccD). Zn(2+) is required as a cofactor.

The protein resides in the cytoplasm. It carries out the reaction N(6)-carboxybiotinyl-L-lysyl-[protein] + acetyl-CoA = N(6)-biotinyl-L-lysyl-[protein] + malonyl-CoA. The protein operates within lipid metabolism; malonyl-CoA biosynthesis; malonyl-CoA from acetyl-CoA: step 1/1. Component of the acetyl coenzyme A carboxylase (ACC) complex. Biotin carboxylase (BC) catalyzes the carboxylation of biotin on its carrier protein (BCCP) and then the CO(2) group is transferred by the transcarboxylase to acetyl-CoA to form malonyl-CoA. The sequence is that of Acetyl-coenzyme A carboxylase carboxyl transferase subunit beta from Clostridium perfringens (strain 13 / Type A).